The following is a 96-amino-acid chain: Small ribosomal subunit protein bS18 (96 aa).

Basic and acidic residues predominate over residues 1–22 (MYKDVDSHQRDSRSDGHQDGFK). A disordered region spans residues 1-25 (MYKDVDSHQRDSRSDGHQDGFKKNP).

It belongs to the bacterial ribosomal protein bS18 family. As to quaternary structure, part of the 30S ribosomal subunit. Forms a tight heterodimer with protein bS6.

Its function is as follows. Binds as a heterodimer with protein bS6 to the central domain of the 16S rRNA, where it helps stabilize the platform of the 30S subunit. The sequence is that of Small ribosomal subunit protein bS18 from Borrelia hermsii (strain HS1 / DAH).